The primary structure comprises 408 residues: Phosphopentomutase (408 aa).

Residues D10, D307, H312, D348, H349, and H360 each contribute to the Mn(2+) site.

The protein belongs to the phosphopentomutase family. Mn(2+) serves as cofactor.

Its subcellular location is the cytoplasm. The catalysed reaction is 2-deoxy-alpha-D-ribose 1-phosphate = 2-deoxy-D-ribose 5-phosphate. The enzyme catalyses alpha-D-ribose 1-phosphate = D-ribose 5-phosphate. It functions in the pathway carbohydrate degradation; 2-deoxy-D-ribose 1-phosphate degradation; D-glyceraldehyde 3-phosphate and acetaldehyde from 2-deoxy-alpha-D-ribose 1-phosphate: step 1/2. In terms of biological role, isomerase that catalyzes the conversion of deoxy-ribose 1-phosphate (dRib-1-P) and ribose 1-phosphate (Rib-1-P) to deoxy-ribose 5-phosphate (dRib-5-P) and ribose 5-phosphate (Rib-5-P), respectively. This chain is Phosphopentomutase, found in Buchnera aphidicola subsp. Baizongia pistaciae (strain Bp).